Here is a 214-residue protein sequence, read N- to C-terminus: Putative pit accessory protein (214 aa).

This sequence belongs to the UPF0111 family.

Could be involved in orthophosphate transport. The protein is Putative pit accessory protein of Rhizobium meliloti (strain 1021) (Ensifer meliloti).